Consider the following 145-residue polypeptide: Mediator of RNA polymerase II transcription subunit 21 (145 aa).

Positions 79-112 (EESTAALQAASLRQLEEENQEAAARLEEVVYRGD) form a coiled coil.

This sequence belongs to the Mediator complex subunit 21 family. As to quaternary structure, component of the Mediator complex.

It is found in the nucleus. Component of the Mediator complex, a coactivator involved in the regulated transcription of nearly all RNA polymerase II-dependent genes. Mediator functions as a bridge to convey information from gene-specific regulatory proteins to the basal RNA polymerase II transcription machinery. Mediator is recruited to promoters by direct interactions with regulatory proteins and serves as a scaffold for the assembly of a functional preinitiation complex with RNA polymerase II and the general transcription factors. This is Mediator of RNA polymerase II transcription subunit 21 (med21) from Danio rerio (Zebrafish).